The sequence spans 245 residues: uncharacterized protein (245 aa).

This sequence to M.tuberculosis Rv2927c.

This is an uncharacterized protein from Mycobacterium leprae (strain TN).